A 624-amino-acid chain; its full sequence is Kelch-like ECH-associated protein 1 (624 aa).

C38 carries the S-(2-succinyl)cysteine modification. The BTB domain occupies 77 to 149 (CDVTLQVKYQ…AYTASISMGE (73 aa)). Residue R135 forms an N5-[4-(S-L-cysteinyl)-5-methyl-1H-imidazol-2-yl]-L-ornithine (Arg-Cys) (interchain with C-151 in KEAP1) linkage. An S-(2-succinyl)cysteine mark is found at C151 and C241. S-(2,3-dicarboxypropyl)cysteine; alternate is present on C151. Residue C151 is modified to S-nitrosocysteine; alternate. C151 is covalently cross-linked (N5-[4-(S-L-cysteinyl)-5-methyl-1H-imidazol-2-yl]-L-ornithine (Cys-Arg) (interchain with R-135 in KEAP1)). A BACK domain is found at 184–286 (AIGIANFAEQ…TPNFLQMQLQ (103 aa)). S-(2,3-dicarboxypropyl)cysteine occurs at positions 257 and 273. S-(2-succinyl)cysteine is present on residues C288 and C319. C288 carries the S-(2,3-dicarboxypropyl)cysteine; alternate modification. Kelch repeat units lie at residues 327–372 (LIYT…VVGG), 373–423 (LLYA…VIDG), 424–470 (HIYA…VLNR), 471–517 (LLYA…VLHN), 518–564 (CIYA…VHQG), and 565–611 (RIYV…VTME). C434 carries the S-cGMP-cysteine modification. An S-(2-succinyl)cysteine modification is found at C613.

It belongs to the KEAP1 family. Component of the BCR(KEAP1) E3 ubiquitin ligase complex, at least composed of 2 molecules of CUL3, 2 molecules of KEAP1, and RBX1. Interacts with NFE2L2/NRF2; the interaction is direct. Forms a ternary complex with NFE2L2/NRF2 and PGAM5. Interacts with (phosphorylated) SQSTM1/p62; the interaction is direct and inactivates the BCR(KEAP1) complex by sequestering it in inclusion bodies, promoting its degradation. Interacts with NFE2L1. Interacts with BPTF and PTMA. Interacts with MAP1LC3B. Interacts indirectly with ENC1. Interacts with SESN1 and SESN2. Interacts with HSP90AA1 and HSP90AB1. Interacts with PGCKA1; this interaction prevents the ubiquitination of KEAP1 by TRIM25, thus protecting KEAP1 from degradation. Post-translationally, non-enzymatic covalent modifications of reactive cysteines by electrophile metabolites inactivate the BCR(KEAP1) complex. Accumulation of fumarate promotes the formation of cysteine S-succination (S-(2-succinyl)cysteine), leading to inactivate the BCR(KEAP1) complex and promote NFE2L2/NRF2 nuclear accumulation and activation. Nitric oxide-dependent 8-Nitro-cGMP formation promotes cysteine guanylation (S-cGMP-cysteine), leading to NFE2L2/NRF2 nuclear accumulation and activation. Itaconate, an anti-inflammatory metabolite generated in response to lipopolysaccharide, alkylates cysteines, activating NFE2L2/NRF2. Methylglyoxal, a reactive metabolite that accumulates when the glycolytic enzyme PGK1 is inhibited, promotes formation of a methylimidazole cross-link between proximal Cys-151 and Arg-135 on another KEAP1 molecule, resulting in an inactive dimer that inactivates the BCR(KEAP1) complex. Degraded via a proteasomal-independent process during selective autophagy: interaction with phosphorylated SQSTM1/p62 sequesters KEAP1 in inclusion bodies, leading to its degradation. In terms of processing, auto-ubiquitinated by the BCR(KEAP1) complex. Quinone-induced oxidative stress, but not sulforaphane, increases its ubiquitination. Ubiquitination and subsequent degradation is most pronounced following prolonged exposure of cells to oxidative stress, particularly in glutathione-deficient cells that are highly susceptible to oxidative stress. Deubiquitinated by USP25; leading to stabilization. Ubiquitinated by TRIM25; leading to degradation upon ER stress.

The protein resides in the cytoplasm. Its subcellular location is the nucleus. The protein operates within protein modification; protein ubiquitination. Its activity is regulated as follows. Ubiquitin ligase activity of the BCR(KEAP1) complex is inhibited by oxidative stress and electrophile metabolites such as sulforaphane. Electrophile metabolites react with reactive cysteine residues in KEAP1 and trigger non-enzymatic covalent modifications of these cysteine residues, leading to inactivate the ubiquitin ligase activity of the BCR(KEAP1) complex. Selective autophagy also inactivates the BCR(KEAP1) complex via interaction between KEAP1 and SQSTM1/p62, which sequesters the complex in inclusion bodies and promotes its degradation. Its function is as follows. Substrate-specific adapter of a BCR (BTB-CUL3-RBX1) E3 ubiquitin ligase complex that regulates the response to oxidative stress by targeting NFE2L2/NRF2 for ubiquitination. KEAP1 acts as a key sensor of oxidative and electrophilic stress: in normal conditions, the BCR(KEAP1) complex mediates ubiquitination and degradation of NFE2L2/NRF2, a transcription factor regulating expression of many cytoprotective genes. In response to oxidative stress, different electrophile metabolites trigger non-enzymatic covalent modifications of highly reactive cysteine residues in KEAP1, leading to inactivate the ubiquitin ligase activity of the BCR(KEAP1) complex, promoting NFE2L2/NRF2 nuclear accumulation and expression of phase II detoxifying enzymes. In response to selective autophagy, KEAP1 is sequestered in inclusion bodies following its interaction with SQSTM1/p62, leading to inactivation of the BCR(KEAP1) complex and activation of NFE2L2/NRF2. The BCR(KEAP1) complex also mediates ubiquitination of SQSTM1/p62, increasing SQSTM1/p62 sequestering activity and degradation. The BCR(KEAP1) complex also targets BPTF and PGAM5 for ubiquitination and degradation by the proteasome. This is Kelch-like ECH-associated protein 1 from Pongo abelii (Sumatran orangutan).